The primary structure comprises 477 residues: ACT domain-containing protein ACR1 (477 aa).

4 ACT domains span residues 38–124 (LIKV…REVQ), 134–214 (AFEI…GDVS), 283–358 (MVNV…RASQ), and 361–441 (KLEI…MMPR). The Bipartite nuclear localization signal motif lies at 329–345 (KKNGGTLETEGQRERLR).

Expressed in flowers and siliques.

It is found in the nucleus. In terms of biological role, may bind amino acids. The protein is ACT domain-containing protein ACR1 of Arabidopsis thaliana (Mouse-ear cress).